A 267-amino-acid chain; its full sequence is 3-methyl-2-oxobutanoate hydroxymethyltransferase (267 aa).

Positions 45 and 84 each coordinate Mg(2+). 3-methyl-2-oxobutanoate-binding positions include 45 to 46, aspartate 84, and lysine 113; that span reads DS. Residue glutamate 115 coordinates Mg(2+). Glutamate 182 serves as the catalytic Proton acceptor.

This sequence belongs to the PanB family. Homodecamer; pentamer of dimers. Mg(2+) is required as a cofactor.

It is found in the cytoplasm. The enzyme catalyses 3-methyl-2-oxobutanoate + (6R)-5,10-methylene-5,6,7,8-tetrahydrofolate + H2O = 2-dehydropantoate + (6S)-5,6,7,8-tetrahydrofolate. Its pathway is cofactor biosynthesis; coenzyme A biosynthesis. Catalyzes the reversible reaction in which hydroxymethyl group from 5,10-methylenetetrahydrofolate is transferred onto alpha-ketoisovalerate to form ketopantoate. In Saccharolobus solfataricus (strain ATCC 35092 / DSM 1617 / JCM 11322 / P2) (Sulfolobus solfataricus), this protein is 3-methyl-2-oxobutanoate hydroxymethyltransferase.